The chain runs to 462 residues: Metal cation symporter ZIP14 (462 aa).

An N-terminal signal peptide occupies residues 1 to 16 (MPLLLLSALLPFSLMA). The Extracellular portion of the chain corresponds to 17–138 (GPTPSTGKEL…PSPGEVWGYG (122 aa)). N-linked (GlcNAc...) asparagine glycosylation is found at Asn42, Asn68, Asn83, and Asn119. The chain crosses the membrane as a helical span at residues 139 to 159 (FLCVTVISLCSLFGAGVVPFM). The Cytoplasmic segment spans residues 160 to 167 (KKACYKRL). A helical membrane pass occupies residues 168–188 (LLFCIALAIGTLFSNALFQLI). Topologically, residues 189 to 201 (PEAFGFNPLEDSY) are extracellular. The chain crosses the membrane as a helical span at residues 202–222 (VFTSSVIFGGFYLFFFTEKVL). The Cytoplasmic segment spans residues 223–322 (KMMLKQKHEH…SDGLHNFIDG (100 aa)). An HHHGHXHX-motif motif is present at residues 230–237 (HEHGHSHY). Residues 235–285 (SHYSADTSKRDAEEGVTEKLQNGDLDHMIPPPHGSESDLRGDEKAVQQQDL) form a disordered region. 2 stretches are compositionally biased toward basic and acidic residues: residues 241 to 251 (TSKRDAEEGVT) and 269 to 279 (SESDLRGDEKA). The helical transmembrane segment at 323–343 (LAIGASFTVSVFQGVSTSIAI) threads the bilayer. The Extracellular segment spans residues 344–367 (LCEEFPHELGDFVILLNAGMSIPQ). Positions 346-351 (EEFPHE) match the XEXPHE-motif motif. Residues 368–388 (ALFFNFLSACCCYLGLAFGIL) traverse the membrane as a helical segment. The Cytoplasmic portion of the chain corresponds to 389-396 (AGSHFSSN). A helical membrane pass occupies residues 397–417 (WIFALAGGMFLYIALSDMFPE). Over 418-431 (MNEVSKEDEEGGRA) the chain is Extracellular. The chain crosses the membrane as a helical span at residues 432 to 452 (FSAFMIQNAGLLTGFAIMLLL). Residues 453-462 (TTFSGQIQLG) lie on the Cytoplasmic side of the membrane.

The protein belongs to the ZIP transporter (TC 2.A.5) family. Homotrimer.

It is found in the cell membrane. The protein resides in the apical cell membrane. It localises to the basolateral cell membrane. Its subcellular location is the early endosome membrane. The protein localises to the late endosome membrane. It is found in the lysosome membrane. It catalyses the reaction Zn(2+)(out) + 2 hydrogencarbonate(out) = Zn(2+)(in) + 2 hydrogencarbonate(in). The catalysed reaction is Mn(2+)(out) + 2 hydrogencarbonate(out) = Mn(2+)(in) + 2 hydrogencarbonate(in). It carries out the reaction Fe(2+)(out) + 2 hydrogencarbonate(out) = Fe(2+)(in) + 2 hydrogencarbonate(in). The enzyme catalyses Cd(2+)(out) + 2 hydrogencarbonate(out) = Cd(2+)(in) + 2 hydrogencarbonate(in). Functionally, electroneutral transporter of the plasma membrane mediating the cellular uptake of the divalent metal cations zinc, manganese and iron that are important for tissue homeostasis, metabolism, development and immunity. Functions as an energy-dependent symporter, transporting through the membranes an electroneutral complex composed of a divalent metal cation and two bicarbonate anions. Beside these endogenous cellular substrates, can also import cadmium a non-essential metal which is cytotoxic and carcinogenic. In Xenopus tropicalis (Western clawed frog), this protein is Metal cation symporter ZIP14.